A 328-amino-acid polypeptide reads, in one-letter code: uncharacterized protein (328 aa).

Coiled-coil stretches lie at residues 67 to 190 (FKEQ…VLEE) and 223 to 251 (MAQRQKQEEVQEVLQEAEKTHQATLDNMM).

This is an uncharacterized protein from Mus musculus (Mouse).